The chain runs to 547 residues: Alpha-1,3-mannosyl-glycoprotein 4-beta-N-acetylglucosaminyltransferase B (547 aa).

Topologically, residues 1–7 (MRLRNGT) are cytoplasmic. A helical; Signal-anchor for type II membrane protein transmembrane segment spans residues 8 to 28 (FLTVLLFGLCGLISLSWYTAF). The Lumenal portion of the chain corresponds to 29–547 (SNSKGNVVDI…LSEIFIKKAE (519 aa)). A coiled-coil region spans residues 36-83 (VDIYQREFLALRDRLHSAEQENLKRSKELNLVLDEIKRAIAEKQALRD). 3 N-linked (GlcNAc...) asparagine glycosylation sites follow: Asn-85, Asn-101, and Asn-464.

Belongs to the glycosyltransferase 54 family. A divalent metal cation serves as cofactor. N-glycosylated.

The protein localises to the golgi apparatus membrane. It catalyses the reaction N(4)-{beta-D-GlcNAc-(1-&gt;2)-alpha-D-Man-(1-&gt;3)-[beta-D-GlcNAc-(1-&gt;2)-alpha-D-Man-(1-&gt;6)]-beta-D-Man-(1-&gt;4)-beta-D-GlcNAc-(1-&gt;4)-beta-D-GlcNAc}-L-asparaginyl-[protein] + UDP-N-acetyl-alpha-D-glucosamine = N(4)-{beta-D-GlcNAc-(1-&gt;2)-[beta-D-GlcNAc-(1-&gt;4)]-alpha-D-Man-(1-&gt;3)-[beta-D-GlcNAc-(1-&gt;2)-alpha-D-Man-(1-&gt;6)]-beta-D-Man-(1-&gt;4)-beta-D-GlcNAc-(1-&gt;4)-beta-D-GlcNAc}-L-asparaginyl-[protein] + UDP + H(+). The enzyme catalyses an N(4)-{beta-D-GlcNAc-(1-&gt;2)-alpha-D-Man-(1-&gt;3)-[alpha-D-Man-(1-&gt;6)]-beta-D-Man-(1-&gt;4)-beta-D-GlcNAc-(1-&gt;4)-beta-D-GlcNAc}-L-asparaginyl-[protein] + UDP-N-acetyl-alpha-D-glucosamine = an N(4)-{beta-D-GlcNAc-(1-&gt;2)-[beta-D-GlcNAc-(1-&gt;4)]-alpha-D-Man-(1-&gt;3)-[alpha-D-Man-(1-&gt;6)]-beta-D-Man-(1-&gt;4)-beta-D-GlcNAc-(1-&gt;4)-beta-D-GlcNAc}-L-asparaginyl-[protein] + UDP + H(+). It carries out the reaction an N(4)-{beta-D-GlcNAc-(1-&gt;2)-alpha-D-Man-(1-&gt;3)-[beta-D-GlcNAc-(1-&gt;2)-[beta-D-GlcNAc-(1-&gt;6)]-alpha-D-Man-(1-&gt;6)]-beta-D-Man-(1-&gt;4)-beta-D-GlcNAc-(1-&gt;4)-beta-D-GlcNAc}-L-asparaginyl-[protein] + UDP-N-acetyl-alpha-D-glucosamine = an N(4)-{beta-D-GlcNAc-(1-&gt;2)-[beta-D-GlcNAc-(1-&gt;4)]-alpha-D-Man-(1-&gt;3)-[beta-D-GlcNAc-(1-&gt;2)-[beta-D-GlcNAc-(1-&gt;6)]-alpha-D-Man-(1-&gt;6)]-beta-D-Man-(1-&gt;4)-beta-D-GlcNAc-(1-&gt;4)-beta-D-GlcNAc}-L-asparaginyl-[protein] + UDP + H(+). The catalysed reaction is an N(4)-{beta-D-GlcNAc-(1-&gt;2)-alpha-D-Man-(1-&gt;3)-[beta-D-GlcNAc-(1-&gt;2)-alpha-D-Man-(1-&gt;6)]-beta-D-Man-(1-&gt;4)-beta-D-GlcNAc-(1-&gt;4)-[alpha-L-Fuc-(1-&gt;6)]-beta-D-GlcNAc}-L-asparaginyl-[protein] + UDP-N-acetyl-alpha-D-glucosamine = N(4)-{beta-D-GlcNAc-(1-&gt;2)-[beta-D-GlcNAc-(1-&gt;4)]-alpha-D-Man-(1-&gt;3)-[beta-D-GlcNAc-(1-&gt;2)-alpha-D-Man-(1-&gt;6)]-beta-D-Man-(1-&gt;4)-beta-D-GlcNAc-(1-&gt;4)-[alpha-L-Fuc-(1-&gt;6)]-beta-D-GlcNAc}-asparaginyl-[protein] + UDP + H(+). It catalyses the reaction an N(4)-{beta-D-GlcNAc-(1-&gt;2)-alpha-D-Man-(1-&gt;3)-[beta-D-Gal-(1-&gt;4)-beta-D-GlcNAc-(1-&gt;2)-alpha-D-Man-(1-&gt;6)]-beta-D-Man-(1-&gt;4)-beta-D-GlcNAc-(1-&gt;4)-beta-D-GlcNAc}-L-asparaginyl-[protein] + UDP-N-acetyl-alpha-D-glucosamine = an N(4)-{beta-D-GlcNAc-(1-&gt;2)-[beta-D-GlcNAc-(1-&gt;4)]-alpha-D-Man-(1-&gt;3)-[beta-D-Gal-(1-&gt;4)-beta-D-GlcNAc-(1-&gt;2)-alpha-D-Man-(1-&gt;6)]-beta-D-Man-(1-&gt;4)-beta-D-GlcNAc-(1-&gt;4)-beta-D-GlcNAc}-L-asparaginyl-[protein] + UDP + H(+). The enzyme catalyses N(4)-{beta-D-GlcNAc-(1-&gt;2)-alpha-D-Man-(1-&gt;3)-[alpha-D-Man-(1-&gt;3)-{alpha-D-Man-(1-&gt;6)}-alpha-D-Man-(1-&gt;6)]-beta-D-Man-(1-&gt;4)-beta-D-GlcNAc-(1-&gt;4)-beta-D-GlcNAc}-asparaginyl-[protein] + UDP-N-acetyl-alpha-D-glucosamine = N(4)-{beta-D-GlcNAc-(1-&gt;2)-[beta-D-GlcNAc-(1-&gt;4)]-alpha-D-Man-(1-&gt;3)-[alpha-D-Man-(1-&gt;3)-{alpha-D-Man-(1-&gt;6)}-alpha-D-Man-(1-&gt;6)]-beta-D-Man-(1-&gt;4)-beta-D-GlcNAc-(1-&gt;4)-beta-D-GlcNAc}-asparaginyl-[protein] + UDP + H(+). It carries out the reaction N(4)-{beta-D-GlcNAc-(1-&gt;2)-alpha-D-Man-(1-&gt;3)-beta-D-Man-(1-&gt;4)-beta-D-GlcNAc-(1-&gt;4)-beta-D-GlcNAc}-asparaginyl-[protein] + UDP-N-acetyl-alpha-D-glucosamine = N(4)-{beta-D-GlcNAc-(1-&gt;2)-[beta-D-GlcNAc-(1-&gt;4)]-alpha-D-Man-(1-&gt;3)-beta-D-Man-(1-&gt;4)-beta-D-GlcNAc-(1-&gt;4)-beta-D-GlcNAc}-asparaginyl-[protein] + UDP + H(+). It participates in protein modification; protein glycosylation. Functionally, glycosyltransferase that catalyze the transfer of GlcNAc from UDP-GlcNAc to the GlcNAcbeta1-2Manalpha1-3 arm of the core structure of N-linked glycans through a beta1-4 linkage and participates in the production of tri- and tetra-antennary N-linked sugar chains. Prefers complex-type N-glycans over hybrid-types. Has lower affinities for donors or acceptors than MGAT4A, suggesting that, under physiological conditions, it is not the main contributor in N-glycan biosynthesis. The sequence is that of Alpha-1,3-mannosyl-glycoprotein 4-beta-N-acetylglucosaminyltransferase B (mgat4bQ9UQ53) from Danio rerio (Zebrafish).